Reading from the N-terminus, the 78-residue chain is Protein SlyX homolog (78 aa).

This sequence belongs to the SlyX family.

This Photobacterium profundum (strain SS9) protein is Protein SlyX homolog.